We begin with the raw amino-acid sequence, 208 residues long: Uracil phosphoribosyltransferase (208 aa).

5-phospho-alpha-D-ribose 1-diphosphate contacts are provided by residues arginine 78, arginine 103, and 130–138; that span reads DPMLATGGS. Uracil contacts are provided by residues isoleucine 193 and 198-200; that span reads GDA. Aspartate 199 is a binding site for 5-phospho-alpha-D-ribose 1-diphosphate.

It belongs to the UPRTase family. It depends on Mg(2+) as a cofactor.

It catalyses the reaction UMP + diphosphate = 5-phospho-alpha-D-ribose 1-diphosphate + uracil. Its pathway is pyrimidine metabolism; UMP biosynthesis via salvage pathway; UMP from uracil: step 1/1. Its activity is regulated as follows. Allosterically activated by GTP. Its function is as follows. Catalyzes the conversion of uracil and 5-phospho-alpha-D-ribose 1-diphosphate (PRPP) to UMP and diphosphate. This is Uracil phosphoribosyltransferase from Vibrio parahaemolyticus serotype O3:K6 (strain RIMD 2210633).